The following is a 980-amino-acid chain: MTEFGWRRFNFFDRSVVFDKDDPKQKFMGLKDVAVDCWCSSGGSVYLGEAKGGVFQLTNQFSEYYWKAYQKSLASLHSADKYLFSIGEDDETVNTLLKIWDPERVEKNTPHVMRTIRMSPLNPTSSSPACSIAVHSSLQSVVVGYTDGTVLFYQGDVLHDKSLNSRWIKVRDSSVGEGSVTGLAIAVLPASKTVVFVITQKHVHSYVLENGRTVIAHKKHDANGATADCWTFDESTGQLIVASREMLFFYDADQCIDMDGGEVGRCLQLGRGHEKLQLVASGQYLALLTKHHSLIQKERDSEFMTMLSVYDIKGQYVGFSCSLPNLCRLFIAGSTMLVLSHDGLLSELIEKNLATKLDILVKKSMFDVAVLIAKNSRDGGDYLKGIHAKYGNYLYGKGDYENAIQQYKETIGMLEPSYVMKRYLDSSKIKELCIYLECLHDAKRDNEHQTKILMNAYAKQGEKKKLMEFVNKITDGTRVSRMRDVFEILLKWNYLAEASLLATKFQMHEDALNVIIHHMHKYTMGVTYISKMPIESVIEMTGKFGRDLLIHARDDLMHMLWEKIQENTDAKKNNFMRIFDIFMGDMDASRVFLSYIENQTNEHDEFIIPILECQMRLFKVNSDWSQERLEEDIYRFINKKNEDAALQMAQLFDCTPVIEHILMRCHKSKELMMYHQKKRDLEAIIRLCQSCSKEEKRRLWLDALSFIGKHATARDELIIIDLLKEIEASEQIHPLVVLELLAKNEHLTISSVRDYIIAWLRKQQIIIEEDRNTIKENNKAMGELDGTVESLKFNAQIMQVTKCSACDTPLQLPTVHFLCKHAYHVHCFESYNMDGSDKCPACQTTRDTTRDEEISYHKFQKELAEASNGMELIAMYLQRGLFDEKTKKTKKSEAKKDPFSTGRASTTTNPFDDDEVTTISRTMSTVSSNMATPSRQRSITRKDDDSTNPFFNSDSGTRLSTYDESKNPFGAPAPSTNPFD.

The CHCR repeat unit spans residues 407 to 554; it reads YKETIGMLEP…GRDLLIHARD (148 aa). An RING-type; atypical zinc finger spans residues 803-843; sequence CSACDTPLQLPTVHFLCKHAYHVHCFESYNMDGSDKCPACQ. Residues 886–898 are compositionally biased toward basic and acidic residues; sequence TKKTKKSEAKKDP. The disordered stretch occupies residues 886–980; that stretch reads TKKTKKSEAK…APAPSTNPFD (95 aa). Polar residues-rich tracts occupy residues 917-937 and 947-960; these read TTIS…SRQR and TNPF…TRLS.

It belongs to the VPS11 family. Probable core component of at least two putative endosomal tethering complexes, the homotypic fusion and vacuole protein sorting (HOPS) complex and the class C core vacuole/endosome tethering (CORVET) complex. Their common core is composed of the class C Vps proteins vps-11, vps-16 and vps-18, which in HOPS further associates with vps-33.1, vps-39 and vps-41 and in CORVET with vps-8 and vps-33.2.

It is found in the late endosome membrane. It localises to the lysosome membrane. Functionally, plays a role in vesicle-mediated protein trafficking to lysosomal compartments including the endocytic membrane transport pathways. Believed to act as a core component of the putative HOPS and CORVET endosomal tethering complexes which are proposed to be involved in the rab-5-to-rab-7 endosome conversion probably implicating sand-1, and via binding SNAREs and SNARE complexes to mediate tethering and docking events during SNARE-mediated membrane fusion. The HOPS complex is proposed to be recruited to Rab7 on the late endosomal membrane and to regulate late endocytic, phagocytic and autophagic traffic towards lysosomes. Within the HOPS complex, contributes to the normal development of gut granules in embryonic and adult intestinal cells. The CORVET complex is proposed to function as a Rab5 effector to mediate early endosome fusion probably in specific endosome subpopulations. Required for fusion of endosomes and autophagosomes with lysosomes. Involved in cargo transport from early to late endosomes and required for the transition from early to late endosomes. Possibly has a role in clearance of apoptotic cells during programmed cell death. This chain is Vacuolar protein sorting-associated protein 11 homolog, found in Caenorhabditis elegans.